A 439-amino-acid polypeptide reads, in one-letter code: Chitinase-like protein Idgf1 (439 aa).

The first 20 residues, 1–20, serve as a signal peptide directing secretion; that stretch reads MRFQLFYILGLLSVTSLTQA. In terms of domain architecture, GH18 spans 22 to 439; sequence NNLVCYYDST…IVRSIKYFMG (418 aa). The cysteines at positions 26 and 53 are disulfide-linked. N-linked (GlcNAc...) asparagine glycans are attached at residues N122, N218, and N346. C340 and C423 are disulfide-bonded.

This sequence belongs to the glycosyl hydrolase 18 family. IDGF subfamily. In terms of processing, glycosylated.

The protein localises to the secreted. Cooperates with insulin-like peptides to stimulate the proliferation, polarization and motility of imaginal disk cells. May act by stabilizing the binding of insulin-like peptides to its receptor through a simultaneous interaction with both molecules to form a multiprotein signaling complex. This Drosophila simulans (Fruit fly) protein is Chitinase-like protein Idgf1 (Idgf1).